We begin with the raw amino-acid sequence, 104 residues long: Type IV secretion system protein PtlB homolog (104 aa).

The chain crosses the membrane as a helical span at residues 30–50 (IALLGIWFSIAFLALFPVALL).

This sequence belongs to the virB3 family.

The protein localises to the cell membrane. This Bordetella bronchiseptica (strain ATCC BAA-588 / NCTC 13252 / RB50) (Alcaligenes bronchisepticus) protein is Type IV secretion system protein PtlB homolog (ptlB).